Reading from the N-terminus, the 264-residue chain is PDZ domain-containing protein 9 (264 aa).

In terms of domain architecture, PDZ spans 30–109; the sequence is QTKLTVGSLG…GTVLQIKVYR (80 aa).

This chain is PDZ domain-containing protein 9 (PDZD9), found in Homo sapiens (Human).